The primary structure comprises 200 residues: GTP cyclohydrolase 1 (200 aa).

The Zn(2+) site is built by Cys87, His90, and Cys158.

This sequence belongs to the GTP cyclohydrolase I family. In terms of assembly, toroid-shaped homodecamer, composed of two pentamers of five dimers.

The enzyme catalyses GTP + H2O = 7,8-dihydroneopterin 3'-triphosphate + formate + H(+). Its pathway is cofactor biosynthesis; 7,8-dihydroneopterin triphosphate biosynthesis; 7,8-dihydroneopterin triphosphate from GTP: step 1/1. This Xanthomonas axonopodis pv. citri (strain 306) protein is GTP cyclohydrolase 1.